Reading from the N-terminus, the 125-residue chain is Large ribosomal subunit protein bL12 (125 aa).

Belongs to the bacterial ribosomal protein bL12 family. In terms of assembly, homodimer. Part of the ribosomal stalk of the 50S ribosomal subunit. Forms a multimeric L10(L12)X complex, where L10 forms an elongated spine to which 2 to 4 L12 dimers bind in a sequential fashion. Binds GTP-bound translation factors.

In terms of biological role, forms part of the ribosomal stalk which helps the ribosome interact with GTP-bound translation factors. Is thus essential for accurate translation. The sequence is that of Large ribosomal subunit protein bL12 from Caldanaerobacter subterraneus subsp. tengcongensis (strain DSM 15242 / JCM 11007 / NBRC 100824 / MB4) (Thermoanaerobacter tengcongensis).